The following is a 297-amino-acid chain: tRNA pseudouridine synthase A (297 aa).

Asp57 functions as the Nucleophile in the catalytic mechanism. Tyr115 is a substrate binding site.

Belongs to the tRNA pseudouridine synthase TruA family. Homodimer.

It catalyses the reaction uridine(38/39/40) in tRNA = pseudouridine(38/39/40) in tRNA. Its function is as follows. Formation of pseudouridine at positions 38, 39 and 40 in the anticodon stem and loop of transfer RNAs. This is tRNA pseudouridine synthase A from Nitratidesulfovibrio vulgaris (strain ATCC 29579 / DSM 644 / CCUG 34227 / NCIMB 8303 / VKM B-1760 / Hildenborough) (Desulfovibrio vulgaris).